The following is a 187-amino-acid chain: GTP cyclohydrolase 1 (187 aa).

Zn(2+) contacts are provided by Cys-79, His-82, and Cys-150.

The protein belongs to the GTP cyclohydrolase I family. Toroid-shaped homodecamer, composed of two pentamers of five dimers.

It catalyses the reaction GTP + H2O = 7,8-dihydroneopterin 3'-triphosphate + formate + H(+). It functions in the pathway cofactor biosynthesis; 7,8-dihydroneopterin triphosphate biosynthesis; 7,8-dihydroneopterin triphosphate from GTP: step 1/1. The sequence is that of GTP cyclohydrolase 1 from Fusobacterium nucleatum subsp. nucleatum (strain ATCC 25586 / DSM 15643 / BCRC 10681 / CIP 101130 / JCM 8532 / KCTC 2640 / LMG 13131 / VPI 4355).